We begin with the raw amino-acid sequence, 275 residues long: NH(3)-dependent NAD(+) synthetase (275 aa).

50–57 (GISGGVDS) is a binding site for ATP. Residue Asp-56 coordinates Mg(2+). Arg-147 is a deamido-NAD(+) binding site. Position 167 (Thr-167) interacts with ATP. Mg(2+) is bound at residue Glu-172. Deamido-NAD(+) is bound by residues Lys-180 and Asp-187. ATP-binding residues include Lys-196 and Thr-218. Position 267–268 (267–268 (HK)) interacts with deamido-NAD(+).

The protein belongs to the NAD synthetase family. As to quaternary structure, homodimer.

It carries out the reaction deamido-NAD(+) + NH4(+) + ATP = AMP + diphosphate + NAD(+) + H(+). Its pathway is cofactor biosynthesis; NAD(+) biosynthesis; NAD(+) from deamido-NAD(+) (ammonia route): step 1/1. Its function is as follows. Catalyzes the ATP-dependent amidation of deamido-NAD to form NAD. Uses ammonia as a nitrogen source. The sequence is that of NH(3)-dependent NAD(+) synthetase from Pseudomonas savastanoi pv. phaseolicola (strain 1448A / Race 6) (Pseudomonas syringae pv. phaseolicola (strain 1448A / Race 6)).